The sequence spans 434 residues: Serine--tRNA ligase (434 aa).

L-serine is bound at residue 239 to 241; sequence TAE. 270–272 lines the ATP pocket; the sequence is RSE. Glu-293 provides a ligand contact to L-serine. Position 357 to 360 (357 to 360) interacts with ATP; it reads EISS. Ser-392 is a binding site for L-serine.

Belongs to the class-II aminoacyl-tRNA synthetase family. Type-1 seryl-tRNA synthetase subfamily. As to quaternary structure, homodimer. The tRNA molecule binds across the dimer.

The protein localises to the cytoplasm. It catalyses the reaction tRNA(Ser) + L-serine + ATP = L-seryl-tRNA(Ser) + AMP + diphosphate + H(+). The enzyme catalyses tRNA(Sec) + L-serine + ATP = L-seryl-tRNA(Sec) + AMP + diphosphate + H(+). The protein operates within aminoacyl-tRNA biosynthesis; selenocysteinyl-tRNA(Sec) biosynthesis; L-seryl-tRNA(Sec) from L-serine and tRNA(Sec): step 1/1. In terms of biological role, catalyzes the attachment of serine to tRNA(Ser). Is also able to aminoacylate tRNA(Sec) with serine, to form the misacylated tRNA L-seryl-tRNA(Sec), which will be further converted into selenocysteinyl-tRNA(Sec). This is Serine--tRNA ligase from Cupriavidus taiwanensis (strain DSM 17343 / BCRC 17206 / CCUG 44338 / CIP 107171 / LMG 19424 / R1) (Ralstonia taiwanensis (strain LMG 19424)).